Consider the following 113-residue polypeptide: Phosphorelay protein LuxU (113 aa).

In terms of domain architecture, HPt spans Gly18 to His113. His57 is modified (phosphohistidine).

Monomer.

Functionally, phosphorelay protein which receives sensory signals from a sensory kinase and transmit them to LuxO. At low cell density, a phosphoryl group is transferred from the sensory kinase, probably on His-57 and this phosphoryl group is further transferred to LuxO. The protein is Phosphorelay protein LuxU (luxU) of Vibrio cholerae serotype O1 (strain ATCC 39315 / El Tor Inaba N16961).